The sequence spans 290 residues: MIFAKGHGTQNDFVLLPDVAARLSLTAAQVAALCDRRRGLGADGILRVTTADAAVAAGVLHRLPDGVSPGDWYMDYRNADGSTAQMCGNGVRVFAHYLRASGLETRDEFVVGSLAGPRPVTVHHADQTHADVTVDMGKANKLGPGEAVVGGRRLSGVAVDVGNPHLACLDPGLTPEQLAALDVGAPVSFDHAQFPEGVNVEVLTARAAGVVCMRVHERGVGETRSCGTGTVAAAVAALASAGQETGTLTVRIPGGDVTVNITDATSLLRGPSVLVASGEISEEWWRDQRR.

Residues Asn11 and Asn78 each contribute to the substrate site. The active-site Proton donor is the Cys87. Substrate contacts are provided by residues 88 to 89 (GN), Asn163, Asn199, and 217 to 218 (ER). The active-site Proton acceptor is Cys226. Position 227–228 (227–228 (GT)) interacts with substrate.

Belongs to the diaminopimelate epimerase family. Homodimer.

Its subcellular location is the cytoplasm. It catalyses the reaction (2S,6S)-2,6-diaminopimelate = meso-2,6-diaminopimelate. It participates in amino-acid biosynthesis; L-lysine biosynthesis via DAP pathway; DL-2,6-diaminopimelate from LL-2,6-diaminopimelate: step 1/1. Catalyzes the stereoinversion of LL-2,6-diaminopimelate (L,L-DAP) to meso-diaminopimelate (meso-DAP), a precursor of L-lysine and an essential component of the bacterial peptidoglycan. The sequence is that of Diaminopimelate epimerase from Mycobacterium ulcerans (strain Agy99).